The primary structure comprises 138 residues: Putative pre-16S rRNA nuclease (138 aa).

It belongs to the YqgF nuclease family.

It localises to the cytoplasm. Functionally, could be a nuclease involved in processing of the 5'-end of pre-16S rRNA. The protein is Putative pre-16S rRNA nuclease of Bacteroides thetaiotaomicron (strain ATCC 29148 / DSM 2079 / JCM 5827 / CCUG 10774 / NCTC 10582 / VPI-5482 / E50).